A 348-amino-acid chain; its full sequence is UDP-glucose 4-epimerase (348 aa).

NAD(+)-binding positions include 12-14, 33-37, 66-67, Phe-88, and Lys-92; these read GYI, DNFHN, and DI. 132 to 134 contacts substrate; that stretch reads SAT. Tyr-157 acts as the Proton acceptor in catalysis. Residues Lys-161 and Tyr-185 each coordinate NAD(+). Substrate is bound by residues 185–187, 206–208, 224–226, Arg-239, and 300–303; these read YFN, NNL, NVF, and REGD.

The protein belongs to the NAD(P)-dependent epimerase/dehydratase family. As to quaternary structure, homodimer. NAD(+) is required as a cofactor.

It catalyses the reaction UDP-alpha-D-glucose = UDP-alpha-D-galactose. It carries out the reaction UDP-N-acetyl-alpha-D-glucosamine = UDP-N-acetyl-alpha-D-galactosamine. The protein operates within carbohydrate metabolism; galactose metabolism. In terms of biological role, catalyzes two distinct but analogous reactions: the reversible epimerization of UDP-glucose to UDP-galactose and the reversible epimerization of UDP-N-acetylglucosamine to UDP-N-acetylgalactosamine. The reaction with UDP-Gal plays a critical role in the Leloir pathway of galactose catabolism in which galactose is converted to the glycolytic intermediate glucose 6-phosphate. It contributes to the catabolism of dietary galactose and enables the endogenous biosynthesis of both UDP-Gal and UDP-GalNAc when exogenous sources are limited. Both UDP-sugar interconversions are important in the synthesis of glycoproteins and glycolipids. This is UDP-glucose 4-epimerase from Bos taurus (Bovine).